We begin with the raw amino-acid sequence, 527 residues long: UDP-glucuronosyltransferase 2A1 (527 aa).

The signal sequence occupies residues 1–20 (MLKNILLWSLQLSLLGMSLG). Residues 21 to 490 (GNVLIWPMEG…LSWFQYHSLD (470 aa)) are Extracellular-facing. N-linked (GlcNAc...) asparagine glycosylation occurs at asparagine 49. At lysine 134 the chain carries N6-succinyllysine. N-linked (GlcNAc...) asparagine glycosylation is present at asparagine 313. A helical transmembrane segment spans residues 491 to 507 (VIGFLLACMASAILLVI). Over 508 to 527 (KCCLFVFQKIGKTXKKNKRD) the chain is Cytoplasmic.

It belongs to the UDP-glycosyltransferase family. In terms of tissue distribution, olfactory epithelium. Mainly found in the sustentacular cells and to a lesser extent in Bowman's gland cells. Also expressed in the olfactory sensory neuron nuclei. Neuronal localization within the olfactory bulb is mainly found in the deeper granular cells.

The protein resides in the membrane. It carries out the reaction glucuronate acceptor + UDP-alpha-D-glucuronate = acceptor beta-D-glucuronoside + UDP + H(+). The catalysed reaction is 16beta,17beta-estriol + UDP-alpha-D-glucuronate = 16beta,17beta-estriol 16-O-(beta-D-glucuronate) + UDP + H(+). The enzyme catalyses 16alpha,17alpha-estriol + UDP-alpha-D-glucuronate = 16alpha,17alpha-estriol 16-O-(beta-D-glucuronate) + UDP + H(+). It catalyses the reaction 17alpha-estradiol + UDP-alpha-D-glucuronate = 17alpha-estradiol 17-O-(beta-D-glucuronate) + UDP + H(+). It carries out the reaction 17alpha-estradiol + UDP-alpha-D-glucuronate = 17alpha-estradiol 3-O-(beta-D-glucuronate) + UDP + H(+). The catalysed reaction is 17beta-estradiol + UDP-alpha-D-glucuronate = 17beta-estradiol 3-O-(beta-D-glucuronate) + UDP + H(+). The enzyme catalyses 17beta-estradiol + UDP-alpha-D-glucuronate = 17beta-estradiol 17-O-(beta-D-glucuronate) + UDP + H(+). It catalyses the reaction testosterone + UDP-alpha-D-glucuronate = testosterone 17-O-(beta-D-glucuronate) + UDP + H(+). It carries out the reaction epitestosterone + UDP-alpha-D-glucuronate = epitestosterone 17-O-(beta-D-glucuronate) + UDP + H(+). The catalysed reaction is lithocholate + UDP-alpha-D-glucuronate = lithocholoyl-3-O-(beta-D-glucuronate) + UDP + H(+). The enzyme catalyses lithocholate + UDP-alpha-D-glucuronate = lithocholoyl-24-O-(beta-D-glucuronate) + UDP. It catalyses the reaction deoxycholate + UDP-alpha-D-glucuronate = deoxycholoyl-24-O-(beta-D-glucuronate) + UDP. It carries out the reaction hyodeoxycholate + UDP-alpha-D-glucuronate = hyodeoxycholate 6-O-(beta-D-glucuronate) + UDP + H(+). The catalysed reaction is hyocholate + UDP-alpha-D-glucuronate = hyocholoyl-24-O-(beta-D-glucuronate) + UDP. UDP-glucuronosyltransferase (UGT) that catalyzes phase II biotransformation reactions in which lipophilic substrates are conjugated with glucuronic acid to increase the metabolite's water solubility, thereby facilitating excretion into either the urine or bile. Essential for the elimination and detoxification of drugs, xenobiotics and endogenous compounds. Catalyzes the glucuronidation of endogenous steroid hormones such as androgens (testosterones) and estrogens (estradiol and estriol). Contributes to bile acid (BA) detoxification by catalyzing the glucuronidation of BA substrates, which are natural detergents for dietary lipids absorption. Shows a high affinity to aliphatic odorants such as citronellol as well as olfactory tissue specificity, and therefore may be involved in olfaction. In Rattus norvegicus (Rat), this protein is UDP-glucuronosyltransferase 2A1.